The chain runs to 181 residues: Inner membrane-spanning protein YciB (181 aa).

5 helical membrane-spanning segments follow: residues 10 to 30 (LVIF…GALI), 50 to 70 (MHLI…VFHD), 80 to 100 (IIYS…KSIL), 118 to 138 (VTWY…YVAF), and 148 to 168 (FKVF…VFYL).

Belongs to the YciB family.

Its subcellular location is the cell inner membrane. In terms of biological role, plays a role in cell envelope biogenesis, maintenance of cell envelope integrity and membrane homeostasis. The protein is Inner membrane-spanning protein YciB of Shewanella baltica (strain OS223).